Here is an 873-residue protein sequence, read N- to C-terminus: Paramyosin (873 aa).

Residues 1–25 form a nonhelical region region; that stretch reads MSSRSSKYMYKSSGGAGDISIEYGT. Residues 26-852 adopt a coiled-coil conformation; that stretch reads DLGALTRLED…IRAKHRSWVT (827 aa). Positions 853 to 873 are nonhelical region; that stretch reads TSQVPGGTRQVFVTEESSQNF.

It belongs to the paramyosin family. In terms of assembly, homodimer. Binds IgG and collagen. Expressed in all tissues except in saliva.

It localises to the cytoplasm. The protein resides in the myofibril. In terms of biological role, paramyosin is a major structural component of many thick filaments isolated from invertebrate muscles. In Rhipicephalus microplus (Cattle tick), this protein is Paramyosin (PRM).